Reading from the N-terminus, the 141-residue chain is Nucleoside diphosphate kinase (141 aa).

ATP-binding residues include Lys9, Phe57, Arg85, Thr91, Arg102, and Asn112. His115 serves as the catalytic Pros-phosphohistidine intermediate.

It belongs to the NDK family. In terms of assembly, homotetramer. It depends on Mg(2+) as a cofactor.

The protein resides in the cytoplasm. It carries out the reaction a 2'-deoxyribonucleoside 5'-diphosphate + ATP = a 2'-deoxyribonucleoside 5'-triphosphate + ADP. The enzyme catalyses a ribonucleoside 5'-diphosphate + ATP = a ribonucleoside 5'-triphosphate + ADP. In terms of biological role, major role in the synthesis of nucleoside triphosphates other than ATP. The ATP gamma phosphate is transferred to the NDP beta phosphate via a ping-pong mechanism, using a phosphorylated active-site intermediate. This chain is Nucleoside diphosphate kinase, found in Chlamydia trachomatis serovar D (strain ATCC VR-885 / DSM 19411 / UW-3/Cx).